The sequence spans 287 residues: Large ribosomal subunit protein uL2 (287 aa).

The interval 221–287 (RGSVMNPCDH…SKRSRGGRDS (67 aa)) is disordered. Positions 258–287 (KTRKKNKPSNKLVVRRRRRISKRSRGGRDS) are enriched in basic residues.

This sequence belongs to the universal ribosomal protein uL2 family. As to quaternary structure, part of the 50S ribosomal subunit. Forms a bridge to the 30S subunit in the 70S ribosome.

Its function is as follows. One of the primary rRNA binding proteins. Required for association of the 30S and 50S subunits to form the 70S ribosome, for tRNA binding and peptide bond formation. It has been suggested to have peptidyltransferase activity; this is somewhat controversial. Makes several contacts with the 16S rRNA in the 70S ribosome. The chain is Large ribosomal subunit protein uL2 from Prochlorococcus marinus (strain MIT 9301).